The sequence spans 504 residues: Plasma protease C1 inhibitor (504 aa).

A signal peptide spans 1–22 (MASRLTPLTLLLLLLAGDRAFS). The tract at residues 22–67 (SDPEATSHSTQDPLEAQAKSRESFPERDDSWSPPEPTVLPSTWPTT) is disordered. Over residues 39–51 (AKSRESFPERDDS) the composition is skewed to basic and acidic residues. 3 N-linked (GlcNAc...) asparagine glycosylation sites follow: Asn75, Asn83, and Asn107. A compositionally biased stretch (polar residues) spans 85–124 (SFSQHSQPAAQLPTDSPGQPPLNSSSQPSTASDLPTQATT). The disordered stretch occupies residues 85–141 (SFSQHSQPAAQLPTDSPGQPPLNSSSQPSTASDLPTQATTEPFCPEPLAQCSDSDRD). Disulfide bonds link Cys128–Cys432 and Cys135–Cys210. N-linked (GlcNAc...) asparagine glycosylation is found at Asn243 and Asn356.

It belongs to the serpin family. In terms of assembly, interacts with MASP1.

The protein resides in the secreted. Functionally, serine protease inhibitor, which acrs as a regulator of the classical complement pathway. Forms a proteolytically inactive stoichiometric complex with the C1r or C1s proteases. May also regulate blood coagulation, fibrinolysis and the generation of kinins. Very efficient inhibitor of FXIIa. Inhibits chymotrypsin and kallikrein. The protein is Plasma protease C1 inhibitor (Serping1) of Mus musculus (Mouse).